The following is a 199-amino-acid chain: Adenylate kinase (199 aa).

Residue 10–15 (GAGKGT) coordinates ATP. The segment at 30–59 (STGDMLRAAVAARTPVGLQAKSIMESGGLV) is NMP. Residues T31, R36, 57–59 (GLV), 85–88 (GFPR), and Q92 contribute to the AMP site. Positions 126–142 (KRAAETLARGEAVRKDD) are LID. Residue R127 participates in ATP binding. 2 residues coordinate AMP: R139 and R150. ATP is bound at residue A178.

The protein belongs to the adenylate kinase family. In terms of assembly, monomer.

Its subcellular location is the cytoplasm. The enzyme catalyses AMP + ATP = 2 ADP. The protein operates within purine metabolism; AMP biosynthesis via salvage pathway; AMP from ADP: step 1/1. Functionally, catalyzes the reversible transfer of the terminal phosphate group between ATP and AMP. Plays an important role in cellular energy homeostasis and in adenine nucleotide metabolism. This chain is Adenylate kinase, found in Methylobacterium nodulans (strain LMG 21967 / CNCM I-2342 / ORS 2060).